The sequence spans 143 residues: EKC/KEOPS complex subunit LAGE3 (143 aa).

Residues 1-57 (MRDADADAGGGADGGDGRGGHSCRGGVDTAAAPAGGAPPAHAPGPGRDAASAARGSR) are disordered. The span at 30–55 (AAAPAGGAPPAHAPGPGRDAASAARG) shows a compositional bias: low complexity.

It belongs to the CTAG/PCC1 family. Component of the EKC/KEOPS complex composed of at least GON7, TP53RK, TPRKB, OSGEP and LAGE3; the whole complex dimerizes. Ubiquitous.

It localises to the cytoplasm. The protein resides in the nucleus. In terms of biological role, component of the EKC/KEOPS complex that is required for the formation of a threonylcarbamoyl group on adenosine at position 37 (t(6)A37) in tRNAs that read codons beginning with adenine. The complex is probably involved in the transfer of the threonylcarbamoyl moiety of threonylcarbamoyl-AMP (TC-AMP) to the N6 group of A37. LAGE3 functions as a dimerization module for the complex. This Homo sapiens (Human) protein is EKC/KEOPS complex subunit LAGE3.